Here is a 796-residue protein sequence, read N- to C-terminus: Peroxisome proliferator-activated receptor gamma coactivator 1-alpha (796 aa).

Lys77 bears the N6-acetyllysine mark. Residues Pro98 to Glu138 form a disordered region. The span at Asp114 to Pro127 shows a compositional bias: polar residues. The LXXLL motif signature appears at Leu142–Leu146. Lys144 is subject to N6-acetyllysine. Phosphothreonine; by AMPK is present on Thr176. Lys182 carries the post-translational modification N6-acetyllysine. The disordered stretch occupies residues Tyr211–Asn275. Basic and acidic residues predominate over residues Asp217 to Ala235. Positions Thr242–Leu258 are enriched in polar residues. Residues Lys252, Lys269, Lys276, Lys319, Lys345, Lys411, Lys440, and Lys449 each carry the N6-acetyllysine modification. The disordered stretch occupies residues Gly288 to Ser350. The tract at residues Gly291–Thr337 is interaction with PPARG. The mediates interaction with RNF34 stretch occupies residues Glu348–Arg796. Ser537 carries the phosphoserine; by AMPK modification. Disordered regions lie at residues Phe541–Ser597 and His611–Lys669. Residues Gln561–Cys576 are compositionally biased toward basic residues. The span at Ser577–Ser597 shows a compositional bias: low complexity. Positions Ser620–Arg629 are enriched in basic residues. A compositionally biased stretch (basic and acidic residues) spans Pro630 to Lys669. In terms of domain architecture, RRM spans Arg675–Arg751. Lys756 and Lys777 each carry N6-acetyllysine.

Homooligomer. Interacts with MYBBP1A; inhibits MYBBP1A transcriptional activation. Interacts with PRDM16, LPIN1 and PML. Interacts (via LXXLL motif) with RORA and RORC (via AF-2 motif); activates RORA and RORC transcriptional activation. Interacts with LRPPRC. Interacts with FOXO1. Interacts with NR5A2. Phosphorylation by AMPK in skeletal muscle increases activation of its own promoter. Phosphorylated by CLK2. In terms of processing, heavily acetylated by KAT2A/GCN5 under conditions of high nutrients, leading to inactivation of PPARGC1A. Deacetylated by SIRT1 in low nutrients/high NAD conditions, leading to its activation. Post-translationally, ubiquitinated. Ubiquitination by RNF34 induces proteasomal degradation.

It is found in the nucleus. It localises to the PML body. Transcriptional coactivator for steroid receptors and nuclear receptors. Greatly increases the transcriptional activity of PPARG and thyroid hormone receptor on the uncoupling protein promoter. Can regulate key mitochondrial genes that contribute to the program of adaptive thermogenesis. Plays an essential role in metabolic reprogramming in response to dietary availability through coordination of the expression of a wide array of genes involved in glucose and fatty acid metabolism. Acts as a key regulator of gluconeogenesis: stimulates hepatic gluconeogenesis by increasing the expression of gluconeogenic enzymes, and acting together with FOXO1 to promote the fasting gluconeogenic program. Induces the expression of PERM1 in the skeletal muscle in an ESRRA-dependent manner. Also involved in the integration of the circadian rhythms and energy metabolism. Required for oscillatory expression of clock genes, such as BMAL1 and NR1D1, through the coactivation of RORA and RORC, and metabolic genes, such as PDK4 and PEPCK. The polypeptide is Peroxisome proliferator-activated receptor gamma coactivator 1-alpha (Ppargc1a) (Rattus norvegicus (Rat)).